Here is a 1076-residue protein sequence, read N- to C-terminus: Atos homolog protein A (1076 aa).

The tract at residues 24 to 32 (ALLITEGRT) is transactivation domain 1 (TAD1). Disordered stretches follow at residues 700–721 (ESMSSNKDSKRPKTCEQNTQLN) and 739–765 (SDQLKNEQDKQEDPTNEKSQNYSQRRS). A compositionally biased stretch (basic and acidic residues) spans 739–754 (SDQLKNEQDKQEDPTN). Residues 878-935 (LLGNFEESVLNYRFDPLGIVDGFTAEVGASGAFCPTHLTLPVEVSFYSVSDDNAPSPY) are required for macropage invasion. The transactivation domain 2 (TAD2) stretch occupies residues 962 to 970 (FNPNKTVVK).

It belongs to the ATOS family.

The protein localises to the nucleus. Its function is as follows. Transcription regulator that syncronizes transcriptional and translational programs to promote macrophage invasion of tissues. This chain is Atos homolog protein A, found in Homo sapiens (Human).